A 461-amino-acid chain; its full sequence is MSHIRSRFSKPADELVVRYTTSLPFDWRLYQEDIKCSTAHARMLGKQSIISAGDSQSIINGLSDILTEIETGSFVFKPEMEDIHMAIEGRLFELIGEAAGRLHTARSRNDQVATDVHLFVKNTCTSTINKIRTLQGALLKQAEAHQQTALPGYTHLQVAQPVLLSHHLLAYFEMLERDCGRFTDAKKRSDVMPLGSGALAGVPYPLDRKMVAEELGFTAISQNSLDAVSERDFVLEYLSDAAICQMHLSRLSEEMVIWSSAEYAFVELDDAYTTGSSIMPQKKNPDVAELCRGKTGRVYGSLNTMLTVMKGLPLSYNRDLQEDKEPLFECADTLGDSLEVFAGMIKTATFKPERMLRALEKGYVLATDIADYLVGKGESFRSSHGIVARLVSYAISQNKTFGELSLEEYRQFSNLFGNDIYAVDIKSALNARNLTGGTAPKQIAQAIARAKKILAEAGVKN.

It belongs to the lyase 1 family. Argininosuccinate lyase subfamily.

The protein localises to the cytoplasm. It catalyses the reaction 2-(N(omega)-L-arginino)succinate = fumarate + L-arginine. Its pathway is amino-acid biosynthesis; L-arginine biosynthesis; L-arginine from L-ornithine and carbamoyl phosphate: step 3/3. This is Argininosuccinate lyase from Dehalococcoides mccartyi (strain ATCC BAA-2266 / KCTC 15142 / 195) (Dehalococcoides ethenogenes (strain 195)).